We begin with the raw amino-acid sequence, 48 residues long: uncharacterized protein (48 aa).

A disordered region spans residues 1 to 48 (MLFCNNNNNNNNNNNNNNNNNNNNNNNNNNNNNNNNNNNSSNNNNFSR).

This is an uncharacterized protein from Dictyostelium discoideum (Social amoeba).